We begin with the raw amino-acid sequence, 412 residues long: MALVNHRENVKGRAQILAIGTANPKNCFRQVDYPDYYFRVTKSDHLIDLKAKFKRMCEKSMIEKRYMHVNEEILEQNPSMNHGGEKMVSSLDVRLDMEIMEIPKLAAEAATKAMDEWGQPKSRITHLVFHSTLGTVMPGVDYELIKLLGLNPSVKRFMLYHLGCYGGGTVLRLAKDLAENNPGSRVLVLCCEMMPSGFHGPPSLQHAHLDILTGHAIFGDGAGAVIVGCVDPSGGTNGVVERGVRRYEQPLFEIHSAYQTVLPDSKDAVGGRLREAGLIYYLSKRLSNDVSGKIDECCLAEAFSAAIKDNFEDWNSLFWIVHPAGRPILDKLDAKLGLNKEKLRASRNVLRDYGNMWSSSVLFVLDEMRKGSIAQRKTTTGEGFEWGVLLGFGPGVTVETVVLRSVPTAKLK.

Residues Cys164, His322, and Asn355 contribute to the active site.

It belongs to the thiolase-like superfamily. Chalcone/stilbene synthases family. As to quaternary structure, homodimer. As to expression, mainly expressed in young leaves, and barely in mature leaves and twigs.

The catalysed reaction is 3 malonyl-CoA + acetyl-CoA + 3 H(+) = orcinol + 4 CO2 + 4 CoA. The enzyme catalyses 3 malonyl-CoA + acetyl-CoA + 2 H(+) = orsellinate + 3 CO2 + 4 CoA. It carries out the reaction 3 malonyl-CoA + acetyl-CoA + 3 H(+) = tetraacetate lactone + 3 CO2 + 4 CoA. It catalyses the reaction 2 malonyl-CoA + acetyl-CoA + 2 H(+) = triacetate lactone + 2 CO2 + 3 CoA. The catalysed reaction is 3 malonyl-CoA + acetyl-CoA + 3 H(+) = 2-acetylphloroglucinol + 3 CO2 + 4 CoA. Its pathway is secondary metabolite biosynthesis; terpenoid biosynthesis. Involved in the biosynthesis of acetate-derived aromatic tetraketides natural products, precursors of daurichromenic acid, an anti-human immunodeficiency viruses (HIV) meroterpenoid consisting of sesquiterpene and orsellinic acid (OSA) moieties. Accepts acetyl-CoA as starter substrate and produces orcinol as the major reaction product, along with four minor products including OSA, tetraacetate lactone, triacetate lactone and 2-acetylphloroglucinol. This is Orcinol synthase from Rhododendron dauricum (Azalea daurica).